The sequence spans 1289 residues: DNA-directed RNA polymerase subunit beta (1289 aa).

This sequence belongs to the RNA polymerase beta chain family. As to quaternary structure, the RNAP catalytic core consists of 2 alpha, 1 beta, 1 beta' and 1 omega subunit. When a sigma factor is associated with the core the holoenzyme is formed, which can initiate transcription.

The enzyme catalyses RNA(n) + a ribonucleoside 5'-triphosphate = RNA(n+1) + diphosphate. In terms of biological role, DNA-dependent RNA polymerase catalyzes the transcription of DNA into RNA using the four ribonucleoside triphosphates as substrates. This is DNA-directed RNA polymerase subunit beta from Methylacidiphilum infernorum (isolate V4) (Methylokorus infernorum (strain V4)).